The sequence spans 520 residues: Ribonuclease Y (520 aa).

A helical transmembrane segment spans residues 4-24 (TMFTIISILLSLICLVVGYFV). The region spanning 210-273 (TVSVVNLPND…ETARIALDKL (64 aa)) is the KH domain. One can recognise an HD domain in the interval 336–429 (VLKHSIEVAH…VAAADALSAA (94 aa)).

This sequence belongs to the RNase Y family.

It is found in the cell membrane. Functionally, endoribonuclease that initiates mRNA decay. In Bacillus pumilus (strain SAFR-032), this protein is Ribonuclease Y.